The following is an 85-amino-acid chain: MSLIDMIFGKRQKSAAIARERLQIILAHERNGRHAPDYLPALQRELMEVISKYVSVNLEDIKVQVERQDDYEVLEVNIVLPEHQR.

It belongs to the MinE family.

In terms of biological role, prevents the cell division inhibition by proteins MinC and MinD at internal division sites while permitting inhibition at polar sites. This ensures cell division at the proper site by restricting the formation of a division septum at the midpoint of the long axis of the cell. This is Cell division topological specificity factor from Chromobacterium violaceum (strain ATCC 12472 / DSM 30191 / JCM 1249 / CCUG 213 / NBRC 12614 / NCIMB 9131 / NCTC 9757 / MK).